Here is a 457-residue protein sequence, read N- to C-terminus: Protein translocase subunit SecY (457 aa).

A run of 10 helical transmembrane segments spans residues 17-37, 75-95, 120-140, 163-183, 195-215, 230-250, 287-307, 326-346, 386-406, and 412-432; these read IFFTFSLLALCRIGVFIPVPG, IALGVVPYISASIIVQLLVVF, LFTLLLACVQSLLFAKFALRM, VFYLTTVVVMTTGTLLLMWIG, ISLIITLGMLASFPSVLGSIF, IVSLLVLCAVFVFVLMATVLI, VIPVIFASSLLMFPATIGQFL, VVYSIFYVLLIIFFTYFWTAT, LLGAVFLAVVAILPSILGRIL, and VSYFLGGTAMLIVVGVVLDTM.

Belongs to the SecY/SEC61-alpha family. As to quaternary structure, component of the Sec protein translocase complex. Heterotrimer consisting of SecY, SecE and SecG subunits. The heterotrimers can form oligomers, although 1 heterotrimer is thought to be able to translocate proteins. Interacts with the ribosome. Interacts with SecDF, and other proteins may be involved. Interacts with SecA.

Its subcellular location is the cell inner membrane. Functionally, the central subunit of the protein translocation channel SecYEG. Consists of two halves formed by TMs 1-5 and 6-10. These two domains form a lateral gate at the front which open onto the bilayer between TMs 2 and 7, and are clamped together by SecE at the back. The channel is closed by both a pore ring composed of hydrophobic SecY resides and a short helix (helix 2A) on the extracellular side of the membrane which forms a plug. The plug probably moves laterally to allow the channel to open. The ring and the pore may move independently. This Chlamydia muridarum (strain MoPn / Nigg) protein is Protein translocase subunit SecY.